We begin with the raw amino-acid sequence, 785 residues long: Cadherin-7 (785 aa).

An N-terminal signal peptide occupies residues M1–A27. Residues E28 to R47 constitute a propeptide that is removed on maturation. Residues E28–T607 are Extracellular-facing. 5 consecutive Cadherin domains span residues W49 to F153, L154 to F262, P263 to F377, S378 to F482, and F482 to Y599. N449 and N530 each carry an N-linked (GlcNAc...) asparagine glycan. Residues G608–V628 form a helical membrane-spanning segment. The Cytoplasmic portion of the chain corresponds to T629–S785.

Its subcellular location is the cell membrane. Its function is as follows. Cadherins are calcium-dependent cell adhesion proteins. They preferentially interact with themselves in a homophilic manner in connecting cells; cadherins may thus contribute to the sorting of heterogeneous cell types. The chain is Cadherin-7 (Cdh7) from Rattus norvegicus (Rat).